Consider the following 556-residue polypeptide: Bifunctional methyltransferase (556 aa).

Residues methionine 1 to glutamine 310 form an RF MTase region. Residues glycine 148–glycine 152, aspartate 171, tryptophan 200, and asparagine 215 each bind S-adenosyl-L-methionine. Asparagine 215 to tyrosine 218 is a substrate binding site. The tRNA MTase stretch occupies residues arginine 313–tyrosine 556. The interval lysine 348–serine 399 is insert. The S-adenosyl-L-methionine site is built by glutamate 403, glutamate 428, asparagine 455, and aspartate 477. Aspartate 477 is a catalytic residue. Substrate contacts are provided by lysine 481 and aspartate 513.

In the C-terminal section; belongs to the class I-like SAM-binding methyltransferase superfamily. TrmB family. The protein in the N-terminal section; belongs to the protein N5-glutamine methyltransferase family. PrmC subfamily.

The enzyme catalyses L-glutaminyl-[peptide chain release factor] + S-adenosyl-L-methionine = N(5)-methyl-L-glutaminyl-[peptide chain release factor] + S-adenosyl-L-homocysteine + H(+). It catalyses the reaction guanosine(46) in tRNA + S-adenosyl-L-methionine = N(7)-methylguanosine(46) in tRNA + S-adenosyl-L-homocysteine. Functionally, methylates the class 1 translation termination release factors RF1/PrfA and RF2/PrfB on the glutamine residue of the universally conserved GGQ motif. Its function is as follows. Catalyzes the formation of N(7)-methylguanine at position 46 (m7G46) in tRNA. The sequence is that of Bifunctional methyltransferase (prmC/trmB) from Rickettsia bellii (strain RML369-C).